The sequence spans 209 residues: 3-demethoxyubiquinol 3-hydroxylase (209 aa).

Positions 58, 88, 91, 140, 172, and 175 each coordinate Fe cation.

This sequence belongs to the COQ7 family. It depends on Fe cation as a cofactor.

It localises to the cell membrane. It carries out the reaction a 5-methoxy-2-methyl-3-(all-trans-polyprenyl)benzene-1,4-diol + AH2 + O2 = a 3-demethylubiquinol + A + H2O. The protein operates within cofactor biosynthesis; ubiquinone biosynthesis. Catalyzes the hydroxylation of 2-nonaprenyl-3-methyl-6-methoxy-1,4-benzoquinol during ubiquinone biosynthesis. The sequence is that of 3-demethoxyubiquinol 3-hydroxylase from Polaromonas naphthalenivorans (strain CJ2).